The following is a 650-amino-acid chain: Probable Xaa-Pro aminopeptidase P (650 aa).

Aspartate 447, aspartate 458, glutamate 556, and glutamate 570 together coordinate Mn(2+).

This sequence belongs to the peptidase M24B family. It depends on Mn(2+) as a cofactor.

It catalyses the reaction Release of any N-terminal amino acid, including proline, that is linked to proline, even from a dipeptide or tripeptide.. Catalyzes the removal of a penultimate prolyl residue from the N-termini of peptides. In Phaeosphaeria nodorum (strain SN15 / ATCC MYA-4574 / FGSC 10173) (Glume blotch fungus), this protein is Probable Xaa-Pro aminopeptidase P (AMPP).